Reading from the N-terminus, the 316-residue chain is Transaldolase (316 aa).

Lys-131 (schiff-base intermediate with substrate) is an active-site residue.

Belongs to the transaldolase family. Type 1 subfamily. Homodimer.

Its subcellular location is the cytoplasm. The enzyme catalyses D-sedoheptulose 7-phosphate + D-glyceraldehyde 3-phosphate = D-erythrose 4-phosphate + beta-D-fructose 6-phosphate. Its pathway is carbohydrate degradation; pentose phosphate pathway; D-glyceraldehyde 3-phosphate and beta-D-fructose 6-phosphate from D-ribose 5-phosphate and D-xylulose 5-phosphate (non-oxidative stage): step 2/3. Its function is as follows. Transaldolase is important for the balance of metabolites in the pentose-phosphate pathway. In Buchnera aphidicola subsp. Baizongia pistaciae (strain Bp), this protein is Transaldolase.